Consider the following 183-residue polypeptide: Ribosome rescue factor SmrB (183 aa).

The 76-residue stretch at L98–E173 folds into the Smr domain.

It belongs to the SmrB family. In terms of assembly, associates with collided ribosomes, but not with correctly translating polysomes.

Acts as a ribosome collision sensor. Detects stalled/collided disomes (pairs of ribosomes where the leading ribosome is stalled and a second ribosome has collided with it) and endonucleolytically cleaves mRNA at the 5' boundary of the stalled ribosome. Stalled/collided disomes form a new interface (primarily via the 30S subunits) that binds SmrB. Cleaved mRNA becomes available for tmRNA ligation, leading to ribosomal subunit dissociation and rescue of stalled ribosomes. This chain is Ribosome rescue factor SmrB, found in Escherichia coli O157:H7.